The sequence spans 96 residues: Small ribosomal subunit protein bS18 (96 aa).

The segment at 1–20 (MSHGGKRRSGDGGSEGSSYS) is disordered.

This sequence belongs to the bacterial ribosomal protein bS18 family. In terms of assembly, part of the 30S ribosomal subunit. Forms a tight heterodimer with protein bS6.

Functionally, binds as a heterodimer with protein bS6 to the central domain of the 16S rRNA, where it helps stabilize the platform of the 30S subunit. This Anaplasma phagocytophilum (strain HZ) protein is Small ribosomal subunit protein bS18.